The chain runs to 330 residues: DNA-directed RNA polymerase subunit alpha (330 aa).

Residues 1-235 (MVREKVKVST…DLFIHFLHAK (235 aa)) form an alpha N-terminal domain (alpha-NTD) region. The tract at residues 270 to 330 (IALKYIFIDQ…KQILGILEKK (61 aa)) is alpha C-terminal domain (alpha-CTD).

It belongs to the RNA polymerase alpha chain family. In plastids the minimal PEP RNA polymerase catalytic core is composed of four subunits: alpha, beta, beta', and beta''. When a (nuclear-encoded) sigma factor is associated with the core the holoenzyme is formed, which can initiate transcription.

The protein localises to the plastid. It is found in the chloroplast. It catalyses the reaction RNA(n) + a ribonucleoside 5'-triphosphate = RNA(n+1) + diphosphate. In terms of biological role, DNA-dependent RNA polymerase catalyzes the transcription of DNA into RNA using the four ribonucleoside triphosphates as substrates. This Gossypium barbadense (Sea Island cotton) protein is DNA-directed RNA polymerase subunit alpha (rpoA).